Here is a 286-residue protein sequence, read N- to C-terminus: MDLRNPNRDPNSRRVLYRTNKEENRKELKHVKIDESTLAQEGKKLDLPKKRFYRQRAHSNPFSDHQLDYPTSPDDMNWSKLFPHYYDSTTGKMTKDVTIADIGCGFGGLLIDLSPAFPEDLILGMEIRVQVTNYVEDRIIALRTNHAKDYQYQNINVIRGNAMKFLPNFFQRAQLSKMFFCFPDPHFKQRKHKARIITNTLLSEYAYVLKDNGVIYTITDVEDLHNWMVKHLEEHPLFERYDKEWEDNDKCVQIMRNATEEGKKVERKKGDKFVACFRRLPNPAIV.

S-adenosyl-L-methionine contacts are provided by residues Gly103, Glu126–Ile127, Asn161–Ala162, and Cys181. Asp184 is a catalytic residue. Thr259–Glu261 contacts S-adenosyl-L-methionine.

Belongs to the class I-like SAM-binding methyltransferase superfamily. TrmB family. As to quaternary structure, forms a complex with TRM82.

It is found in the nucleus. The enzyme catalyses guanosine(46) in tRNA + S-adenosyl-L-methionine = N(7)-methylguanosine(46) in tRNA + S-adenosyl-L-homocysteine. It functions in the pathway tRNA modification; N(7)-methylguanine-tRNA biosynthesis. Catalyzes the formation of N(7)-methylguanine at position 46 (m7G46) in tRNA. The protein is tRNA (guanine-N(7)-)-methyltransferase of Vanderwaltozyma polyspora (strain ATCC 22028 / DSM 70294 / BCRC 21397 / CBS 2163 / NBRC 10782 / NRRL Y-8283 / UCD 57-17) (Kluyveromyces polysporus).